Here is a 705-residue protein sequence, read N- to C-terminus: Ribosomal RNA large subunit methyltransferase K/L (705 aa).

Positions 43 to 154 constitute a THUMP domain; sequence VVYRCCLWSR…GEKGILGFDL (112 aa).

It belongs to the methyltransferase superfamily. RlmKL family.

The protein resides in the cytoplasm. The catalysed reaction is guanosine(2445) in 23S rRNA + S-adenosyl-L-methionine = N(2)-methylguanosine(2445) in 23S rRNA + S-adenosyl-L-homocysteine + H(+). It carries out the reaction guanosine(2069) in 23S rRNA + S-adenosyl-L-methionine = N(2)-methylguanosine(2069) in 23S rRNA + S-adenosyl-L-homocysteine + H(+). Its function is as follows. Specifically methylates the guanine in position 2445 (m2G2445) and the guanine in position 2069 (m7G2069) of 23S rRNA. This chain is Ribosomal RNA large subunit methyltransferase K/L, found in Aliivibrio fischeri (strain MJ11) (Vibrio fischeri).